Consider the following 206-residue polypeptide: Ras-related protein Rab-7b (206 aa).

15-22 (GDSGVGKT) contacts GTP. Phosphoserine is present on residues S17 and S23. 3 positions are modified to phosphothreonine: T34, T40, and T64. GTP is bound by residues 34–40 (TQQYRAT) and 63–67 (DTAGQ). An Effector region motif is present at residues 37-45 (YRATVGADF). The residue at position 72 (S72) is a Phosphoserine. 2 positions are modified to phosphotyrosine: Y78 and Y88. Residues 125 to 128 (NKLD) and 157 to 158 (AK) contribute to the GTP site. 2 S-geranylgeranyl cysteine lipidation sites follow: C205 and C206.

This sequence belongs to the small GTPase superfamily. Rab family. In terms of processing, glycosylated.

It is found in the cytoplasm. Its subcellular location is the cytoskeleton. In Paramecium octaurelia, this protein is Ras-related protein Rab-7b.